We begin with the raw amino-acid sequence, 364 residues long: MAQRWGPQKLAGGQPQAGFEDSTQASIFTYTNNNATRDPFEGPNYHIAPRWVYHVTSAWMIFVVIASVFTNGLVLAATMRFKKLRHPLNWILVNLAVADLAETIIASTISVVNQIYGYFVLGHPMCVVEGYTVSLCGITGLWSLAIISWERWMVVCKPFGNVRFDAKLAVAGIAFSWIWAAVWTAPPIFGWSRYWPHGLKTSCGPDVFSGSSYPGVQSYMIVLMITCCIIPLSVIVLCYLQVWLAIRAVAKQQKESESTQKAEKEVTRMVMVMVFAFCLCWGPYTFFACFAAAHPGYAFHPLVAALPAYFAKSATIYNPIIYVFMNRQFRNCILQLFGKKVDDSSELSSVSKTEASSVSSVSPA.

The Extracellular portion of the chain corresponds to 1–52 (MAQRWGPQKLAGGQPQAGFEDSTQASIFTYTNNNATRDPFEGPNYHIAPRWV). O-linked (GlcNAc) serine glycosylation is present at serine 22. N-linked (GlcNAc...) asparagine glycosylation occurs at asparagine 34. A helical transmembrane segment spans residues 53-77 (YHVTSAWMIFVVIASVFTNGLVLAA). The Cytoplasmic segment spans residues 78–89 (TMRFKKLRHPLN). The helical transmembrane segment at 90–115 (WILVNLAVADLAETIIASTISVVNQI) threads the bilayer. Over 116–129 (YGYFVLGHPMCVVE) the chain is Extracellular. Cysteine 126 and cysteine 203 form a disulfide bridge. A helical membrane pass occupies residues 130–149 (GYTVSLCGITGLWSLAIISW). Over 150-168 (ERWMVVCKPFGNVRFDAKL) the chain is Cytoplasmic. The helical transmembrane segment at 169–192 (AVAGIAFSWIWAAVWTAPPIFGWS) threads the bilayer. At 193–218 (RYWPHGLKTSCGPDVFSGSSYPGVQS) the chain is on the extracellular side. Residues 219–246 (YMIVLMITCCIIPLSVIVLCYLQVWLAI) traverse the membrane as a helical segment. The Cytoplasmic segment spans residues 247–268 (RAVAKQQKESESTQKAEKEVTR). The chain crosses the membrane as a helical span at residues 269–292 (MVMVMVFAFCLCWGPYTFFACFAA). Residues 293–300 (AHPGYAFH) lie on the Extracellular side of the membrane. Residues 301-325 (PLVAALPAYFAKSATIYNPIIYVFM) traverse the membrane as a helical segment. Lysine 312 is subject to N6-(retinylidene)lysine. Over 326 to 364 (NRQFRNCILQLFGKKVDDSSELSSVSKTEASSVSSVSPA) the chain is Cytoplasmic.

It belongs to the G-protein coupled receptor 1 family. Opsin subfamily. In terms of processing, phosphorylated on some or all of the serine and threonine residues present in the C-terminal region. The three color pigments are found in the cone photoreceptor cells. Expressed in retina.

The protein resides in the membrane. In terms of biological role, visual pigments are the light-absorbing molecules that mediate vision. They consist of an apoprotein, opsin, covalently linked to cis-retinal. This chain is Long-wave-sensitive opsin 1 (OPN1LW), found in Equus caballus (Horse).